Consider the following 986-residue polypeptide: Isoleucine--tRNA ligase (986 aa).

The 'KMSKS' region motif lies at 534–538 (EMHKS). Lys537 provides a ligand contact to ATP.

Belongs to the class-I aminoacyl-tRNA synthetase family. IleS type 2 subfamily. As to quaternary structure, monomer. Zn(2+) serves as cofactor.

It is found in the cytoplasm. It carries out the reaction tRNA(Ile) + L-isoleucine + ATP = L-isoleucyl-tRNA(Ile) + AMP + diphosphate. In terms of biological role, catalyzes the attachment of isoleucine to tRNA(Ile). As IleRS can inadvertently accommodate and process structurally similar amino acids such as valine, to avoid such errors it has two additional distinct tRNA(Ile)-dependent editing activities. One activity is designated as 'pretransfer' editing and involves the hydrolysis of activated Val-AMP. The other activity is designated 'posttransfer' editing and involves deacylation of mischarged Val-tRNA(Ile). This chain is Isoleucine--tRNA ligase (ileS), found in Saccharolobus solfataricus (strain ATCC 35092 / DSM 1617 / JCM 11322 / P2) (Sulfolobus solfataricus).